Consider the following 451-residue polypeptide: Putative metabolite transport protein YyaJ (451 aa).

Topologically, residues 1–29 (MNTIFKQKNTHPFSNAANRLDRLPISRVH) are cytoplasmic. The helical transmembrane segment at 30 to 50 (FQVLTALGIVYFFDLADLFTL) threads the bilayer. At 51–60 (SNVAPALIEH) the chain is on the extracellular side. A helical membrane pass occupies residues 61 to 81 (WGIPLSTIANVTAASFLGMFL). The Cytoplasmic segment spans residues 82-97 (GASLGGRLSDRIGRKK). The chain crosses the membrane as a helical span at residues 98-118 (ALNLFVFVFSIASLCNAAAWD). Residues 119–124 (IPSLMT) are Extracellular-facing. A helical transmembrane segment spans residues 125 to 145 (FRFLTGFGVAAAMVITNSYLA). The Cytoplasmic portion of the chain corresponds to 146 to 157 (EFFPSSVRGKYI). A helical membrane pass occupies residues 158–178 (SFCAMIGLIGVPITNIVSAFV). The Extracellular segment spans residues 179-182 (IPLG). Residues 183 to 203 (SWGWRLVFVWGAVGLIYFFFI) traverse the membrane as a helical segment. At 204 to 270 (HRLEESPRWH…LLKGRNLKIT (67 aa)) the chain is on the cytoplasmic side. Residues 271–291 (IVLSAVWIFETFGFYGFASWV) traverse the membrane as a helical segment. At 292-305 (PSLLKSNGVTMENT) the chain is on the extracellular side. Residues 306 to 326 (LWYNVLHSVGAPLGALLGSMI) form a helical membrane-spanning segment. Residues 327 to 333 (SERFQRK) are Cytoplasmic-facing. The helical transmembrane segment at 334–354 (WILAASAFLTAIAGLLYGMTF) threads the bilayer. The Extracellular segment spans residues 355-357 (IPI). Residues 358 to 378 (MIIVFGFIVNITERVFTSNLY) form a helical membrane-spanning segment. Topologically, residues 379-396 (AYTSEPYPTEYRSSGSGL) are cytoplasmic. Residues 397 to 417 (AYGLGRFSNIFGSLLVGFIAV) form a helical membrane-spanning segment. The Extracellular portion of the chain corresponds to 418–421 (QLGY). A helical transmembrane segment spans residues 422-442 (ISVFLFIGGCWLACSLLLIFF). The Cytoplasmic portion of the chain corresponds to 443–451 (GPNTNAKQI).

Belongs to the major facilitator superfamily. Sugar transporter (TC 2.A.1.1) family.

It is found in the cell membrane. The chain is Putative metabolite transport protein YyaJ (yyaJ) from Bacillus subtilis (strain 168).